The primary structure comprises 72 residues: Large ribosomal subunit protein bL31 (72 aa).

Residues Cys16, Cys18, Cys38, and Cys41 each contribute to the Zn(2+) site.

The protein belongs to the bacterial ribosomal protein bL31 family. Type A subfamily. As to quaternary structure, part of the 50S ribosomal subunit. Requires Zn(2+) as cofactor.

In terms of biological role, binds the 23S rRNA. The chain is Large ribosomal subunit protein bL31 from Vibrio campbellii (strain ATCC BAA-1116).